Here is a 197-residue protein sequence, read N- to C-terminus: Protein Hikeshi (197 aa).

The segment at 18–55 (VAEDKFVFDLPDYENINHVVVFMLGTIPFPEGMGGSVY) is required for F-X-F-G repeats-nucleoporins recognition and nuclear import. Residues 124 to 134 (QTPVGSAAVSS) are flexible linker region involved in nuclear import of HSP70 proteins.

It belongs to the OPI10 family. Forms an asymmetric homodimer; required for binding and nuclear import of HSP70 proteins. Interacts with ATP-bound HSP70 proteins. Interacts with NUP62 and NUP153 (via F-X-F-G repeats). Interacts with HSPA8. Expressed in the central white matter of newborn and adult brain, particularly in regions where oligodendrocytes are generated.

Its subcellular location is the cytoplasm. It localises to the cytosol. It is found in the nucleus. In terms of biological role, acts as a specific nuclear import carrier for HSP70 proteins following heat-shock stress: acts by mediating the nucleoporin-dependent translocation of ATP-bound HSP70 proteins into the nucleus. HSP70 proteins import is required to protect cells from heat shock damages. Does not translocate ADP-bound HSP70 proteins into the nucleus. May also be indirectly required for organization and/or function of the secretory apparatus in Club cells in lung. The protein is Protein Hikeshi of Mus musculus (Mouse).